Here is a 164-residue protein sequence, read N- to C-terminus: Phosphopantetheine adenylyltransferase (164 aa).

Ser-10 provides a ligand contact to substrate. ATP is bound by residues 10 to 11 and His-18; that span reads SF. 3 residues coordinate substrate: Lys-42, Met-74, and Arg-88. Residues 89-91, Glu-99, and 124-130 contribute to the ATP site; these read GLR and YFFVSAR.

This sequence belongs to the bacterial CoaD family. As to quaternary structure, homohexamer. It depends on Mg(2+) as a cofactor.

It is found in the cytoplasm. The catalysed reaction is (R)-4'-phosphopantetheine + ATP + H(+) = 3'-dephospho-CoA + diphosphate. It participates in cofactor biosynthesis; coenzyme A biosynthesis; CoA from (R)-pantothenate: step 4/5. Reversibly transfers an adenylyl group from ATP to 4'-phosphopantetheine, yielding dephospho-CoA (dPCoA) and pyrophosphate. The polypeptide is Phosphopantetheine adenylyltransferase (Anaeromyxobacter dehalogenans (strain 2CP-C)).